Reading from the N-terminus, the 75-residue chain is Small ribosomal subunit protein bS18 (75 aa).

It belongs to the bacterial ribosomal protein bS18 family. As to quaternary structure, part of the 30S ribosomal subunit. Forms a tight heterodimer with protein bS6.

Functionally, binds as a heterodimer with protein bS6 to the central domain of the 16S rRNA, where it helps stabilize the platform of the 30S subunit. The protein is Small ribosomal subunit protein bS18 of Buchnera aphidicola subsp. Cinara cedri (strain Cc).